Reading from the N-terminus, the 113-residue chain is uncharacterized protein (113 aa).

A run of 2 helical transmembrane segments spans residues 1 to 21 (MLIAGTLCVCAAVISAVFGTW) and 48 to 68 (IMLAAGGVVALVAVAHTALIV).

The protein to M.tuberculosis Rv0039.

The protein localises to the cell membrane. This is an uncharacterized protein from Mycobacterium leprae (strain TN).